The chain runs to 261 residues: Chitinase 8 (261 aa).

The N-terminal stretch at 1–29 is a signal peptide; that stretch reads MTTTTTRFVQLAACAAASLLAVAASGAAA. Disulfide bonds link C53/C115 and C221/C253. The Proton donor role is filled by E98.

It belongs to the glycosyl hydrolase 19 family. Chitinase class II subfamily. In terms of tissue distribution, expressed in roots, leaves, sheaths and meristems.

The enzyme catalyses Random endo-hydrolysis of N-acetyl-beta-D-glucosaminide (1-&gt;4)-beta-linkages in chitin and chitodextrins.. The chain is Chitinase 8 (Cht8) from Oryza sativa subsp. japonica (Rice).